The sequence spans 440 residues: Enolase 1 (440 aa).

His161 and Glu170 together coordinate substrate. Glu213 functions as the Proton donor in the catalytic mechanism. Mg(2+)-binding residues include Asp248, Glu297, and Asp324. 2 residues coordinate substrate: Glu297 and Asp324. The active-site Proton acceptor is the Lys349. Residues Ser376–Ser379 and Lys400 each bind substrate.

The protein belongs to the enolase family. As to quaternary structure, homodimer. Mg(2+) serves as cofactor.

It is found in the cytoplasm. It catalyses the reaction (2R)-2-phosphoglycerate = phosphoenolpyruvate + H2O. Its pathway is carbohydrate degradation; glycolysis; pyruvate from D-glyceraldehyde 3-phosphate: step 4/5. This is Enolase 1 (ENO1) from Candida albicans (strain SC5314 / ATCC MYA-2876) (Yeast).